The following is a 161-amino-acid chain: Regulator of ribonuclease activity A (161 aa).

It belongs to the RraA family. Homotrimer. Binds to both RNA-binding sites in the C-terminal region of Rne and to RhlB.

It is found in the cytoplasm. Globally modulates RNA abundance by binding to RNase E (Rne) and regulating its endonucleolytic activity. Can modulate Rne action in a substrate-dependent manner by altering the composition of the degradosome. Modulates RNA-binding and helicase activities of the degradosome. This is Regulator of ribonuclease activity A from Escherichia fergusonii (strain ATCC 35469 / DSM 13698 / CCUG 18766 / IAM 14443 / JCM 21226 / LMG 7866 / NBRC 102419 / NCTC 12128 / CDC 0568-73).